Consider the following 521-residue polypeptide: Bifunctional purine biosynthesis protein PurH (521 aa).

Residues 1–145 (MIKQALISVS…KNHKDVIVIC (145 aa)) enclose the MGS-like domain.

The protein belongs to the PurH family.

The catalysed reaction is (6R)-10-formyltetrahydrofolate + 5-amino-1-(5-phospho-beta-D-ribosyl)imidazole-4-carboxamide = 5-formamido-1-(5-phospho-D-ribosyl)imidazole-4-carboxamide + (6S)-5,6,7,8-tetrahydrofolate. It catalyses the reaction IMP + H2O = 5-formamido-1-(5-phospho-D-ribosyl)imidazole-4-carboxamide. The protein operates within purine metabolism; IMP biosynthesis via de novo pathway; 5-formamido-1-(5-phospho-D-ribosyl)imidazole-4-carboxamide from 5-amino-1-(5-phospho-D-ribosyl)imidazole-4-carboxamide (10-formyl THF route): step 1/1. Its pathway is purine metabolism; IMP biosynthesis via de novo pathway; IMP from 5-formamido-1-(5-phospho-D-ribosyl)imidazole-4-carboxamide: step 1/1. In Janthinobacterium sp. (strain Marseille) (Minibacterium massiliensis), this protein is Bifunctional purine biosynthesis protein PurH.